The primary structure comprises 288 residues: MVGVGGGDVEDVTPRPGGCQISGRGARGCNGIPGAAAWEAALPRRRPRRHPSVNPRSRAAGSPRTRGRRTEERPSGSRLGDRGRGRALPGGRLGGRGRGRAPERVGGRGRGRGTAAPRAAPAARGSRPGPAGTMAAGSITTLPALPEDGGSGAFPPGHFKDPKRLYCKNGGFFLRIHPDGRVDGVREKSDPHIKLQLQAEERGVVSIKGVCANRYLAMKEDGRLLASKCVTDECFFFERLESNNYNTYRSRKYTSWYVALKRTGQYKLGSKTGPGQKAILFLPMSAKS.

The segment at 1 to 133 (MVGVGGGDVE…RGSRPGPAGT (133 aa)) is disordered. Positions 1 to 142 (MVGVGGGDVE…TMAAGSITTL (142 aa)) are cleaved as a propeptide — or 93, or 124, or 125, or 131, or 161. Over residues 52-64 (SVNPRSRAAGSPR) the composition is skewed to low complexity. Residues 68–84 (RRTEERPSGSRLGDRGR) show a composition bias toward basic and acidic residues. An omega-N-methylarginine; alternate mark is found at Arg-108, Arg-110, and Arg-112. Arg-108, Arg-110, and Arg-112 each carry symmetric dimethylarginine; alternate. A compositionally biased stretch (low complexity) spans 113–132 (GTAAPRAAPAARGSRPGPAG). Asn-169 is a heparin binding site. Positions 179 to 181 (DGR) match the Cell attachment site; atypical motif. Tyr-215 carries the post-translational modification Phosphotyrosine; by TEC. The Cell attachment site; atypical signature appears at 221-223 (DGR). Lys-228 is covalently cross-linked (Glycyl lysine isopeptide (Lys-Gly) (interchain with G-Cter in SUMO1)). The tract at residues 261-277 (KRTGQYKLGSKTGPGQK) is heparin-binding.

Belongs to the heparin-binding growth factors family. Monomer. Homodimer. Interacts with FGFR1, FGFR2, FGFR3 and FGFR4. Affinity between fibroblast growth factors (FGFs) and their receptors is increased by heparan sulfate glycosaminoglycans that function as coreceptors. Interacts with CSPG4, FGFBP1 and TEC. Found in a complex with FGFBP1, FGF1 and FGF2. Interacts with FGFBP3. Interacts with integrin ITGAV:ITGB3; the interaction is required for FGF2 signaling. Interacts with SNORC (via the extracellular domain). Interacts with glypican GPC3. In terms of processing, phosphorylation at Tyr-215 regulates FGF2 unconventional secretion. Several N-termini starting at positions 94, 125, 126, 132, 143 and 162 have been identified by direct sequencing. Expressed in granulosa and cumulus cells. Expressed in hepatocellular carcinoma cells, but not in non-cancerous liver tissue.

Its subcellular location is the secreted. The protein resides in the nucleus. Acts as a ligand for FGFR1, FGFR2, FGFR3 and FGFR4. Also acts as an integrin ligand which is required for FGF2 signaling. Binds to integrin ITGAV:ITGB3. Plays an important role in the regulation of cell survival, cell division, cell differentiation and cell migration. Functions as a potent mitogen in vitro. Can induce angiogenesis. Mediates phosphorylation of ERK1/2 and thereby promotes retinal lens fiber differentiation. This is Fibroblast growth factor 2 (FGF2) from Homo sapiens (Human).